The following is a 159-amino-acid chain: Ribosomal RNA large subunit methyltransferase H (159 aa).

S-adenosyl-L-methionine-binding positions include L76, G107, and I126 to L131.

This sequence belongs to the RNA methyltransferase RlmH family. In terms of assembly, homodimer.

It localises to the cytoplasm. It carries out the reaction pseudouridine(1915) in 23S rRNA + S-adenosyl-L-methionine = N(3)-methylpseudouridine(1915) in 23S rRNA + S-adenosyl-L-homocysteine + H(+). Functionally, specifically methylates the pseudouridine at position 1915 (m3Psi1915) in 23S rRNA. The chain is Ribosomal RNA large subunit methyltransferase H from Cupriavidus metallidurans (strain ATCC 43123 / DSM 2839 / NBRC 102507 / CH34) (Ralstonia metallidurans).